A 459-amino-acid chain; its full sequence is Exodeoxyribonuclease 7 large subunit (459 aa).

It belongs to the XseA family. Heterooligomer composed of large and small subunits.

The protein localises to the cytoplasm. The catalysed reaction is Exonucleolytic cleavage in either 5'- to 3'- or 3'- to 5'-direction to yield nucleoside 5'-phosphates.. Its function is as follows. Bidirectionally degrades single-stranded DNA into large acid-insoluble oligonucleotides, which are then degraded further into small acid-soluble oligonucleotides. This Pseudomonas aeruginosa (strain ATCC 15692 / DSM 22644 / CIP 104116 / JCM 14847 / LMG 12228 / 1C / PRS 101 / PAO1) protein is Exodeoxyribonuclease 7 large subunit.